Here is a 341-residue protein sequence, read N- to C-terminus: S-adenosylmethionine:tRNA ribosyltransferase-isomerase (341 aa).

This sequence belongs to the QueA family. Monomer.

The protein localises to the cytoplasm. The catalysed reaction is 7-aminomethyl-7-carbaguanosine(34) in tRNA + S-adenosyl-L-methionine = epoxyqueuosine(34) in tRNA + adenine + L-methionine + 2 H(+). Its pathway is tRNA modification; tRNA-queuosine biosynthesis. Transfers and isomerizes the ribose moiety from AdoMet to the 7-aminomethyl group of 7-deazaguanine (preQ1-tRNA) to give epoxyqueuosine (oQ-tRNA). The polypeptide is S-adenosylmethionine:tRNA ribosyltransferase-isomerase (Desulfitobacterium hafniense (strain DSM 10664 / DCB-2)).